The sequence spans 148 residues: Histone H2A-like 3 (148 aa).

The segment at 101-128 is disordered; the sequence is DDTHSQVEEMPQSEEEEEEEEEKEEEMV. The span at 111-127 shows a compositional bias: acidic residues; sequence PQSEEEEEEEEEKEEEM.

It belongs to the histone H2A family. As to quaternary structure, the nucleosome is a histone octamer containing two molecules each of H2A, H2B, H3 and H4 assembled in one H3-H4 heterotetramer and two H2A-H2B heterodimers. The octamer wraps approximately 147 bp of DNA.

It localises to the nucleus. The protein localises to the chromosome. Core component of nucleosome. Nucleosomes wrap and compact DNA into chromatin, limiting DNA accessibility to the cellular machineries which require DNA as a template. Histones thereby play a central role in transcription regulation, DNA repair, DNA replication and chromosomal stability. DNA accessibility is regulated via a complex set of post-translational modifications of histones, also called histone code, and nucleosome remodeling. The sequence is that of Histone H2A-like 3 from Homo sapiens (Human).